We begin with the raw amino-acid sequence, 271 residues long: Formamidopyrimidine-DNA glycosylase (271 aa).

Pro-2 acts as the Schiff-base intermediate with DNA in catalysis. The Proton donor role is filled by Glu-3. The active-site Proton donor; for beta-elimination activity is the Lys-57. His-90, Arg-109, and Lys-151 together coordinate DNA. The FPG-type zinc-finger motif lies at 236–270; it reads HVYGRGGETCTECGHLLSEIRLGQRTTVFCSLCQT. Arg-260 functions as the Proton donor; for delta-elimination activity in the catalytic mechanism.

The protein belongs to the FPG family. In terms of assembly, monomer. Zn(2+) serves as cofactor.

The enzyme catalyses Hydrolysis of DNA containing ring-opened 7-methylguanine residues, releasing 2,6-diamino-4-hydroxy-5-(N-methyl)formamidopyrimidine.. It carries out the reaction 2'-deoxyribonucleotide-(2'-deoxyribose 5'-phosphate)-2'-deoxyribonucleotide-DNA = a 3'-end 2'-deoxyribonucleotide-(2,3-dehydro-2,3-deoxyribose 5'-phosphate)-DNA + a 5'-end 5'-phospho-2'-deoxyribonucleoside-DNA + H(+). Involved in base excision repair of DNA damaged by oxidation or by mutagenic agents. Acts as a DNA glycosylase that recognizes and removes damaged bases. Has a preference for oxidized purines, such as 7,8-dihydro-8-oxoguanine (8-oxoG). Has AP (apurinic/apyrimidinic) lyase activity and introduces nicks in the DNA strand. Cleaves the DNA backbone by beta-delta elimination to generate a single-strand break at the site of the removed base with both 3'- and 5'-phosphates. The sequence is that of Formamidopyrimidine-DNA glycosylase from Shewanella amazonensis (strain ATCC BAA-1098 / SB2B).